Here is a 387-residue protein sequence, read N- to C-terminus: Succinate--CoA ligase [ADP-forming] subunit beta (387 aa).

The 228-residue stretch at Lys-9–Lys-236 folds into the ATP-grasp domain. Residues Lys-45, Gly-52 to Gly-54, Ser-94, and Glu-99 contribute to the ATP site. Residues Asn-191 and Asp-205 each contribute to the Mg(2+) site. Residues Asn-256 and Gly-318 to Thr-320 contribute to the substrate site.

This sequence belongs to the succinate/malate CoA ligase beta subunit family. In terms of assembly, heterotetramer of two alpha and two beta subunits. It depends on Mg(2+) as a cofactor.

It carries out the reaction succinate + ATP + CoA = succinyl-CoA + ADP + phosphate. The catalysed reaction is GTP + succinate + CoA = succinyl-CoA + GDP + phosphate. The protein operates within carbohydrate metabolism; tricarboxylic acid cycle; succinate from succinyl-CoA (ligase route): step 1/1. Functionally, succinyl-CoA synthetase functions in the citric acid cycle (TCA), coupling the hydrolysis of succinyl-CoA to the synthesis of either ATP or GTP and thus represents the only step of substrate-level phosphorylation in the TCA. The beta subunit provides nucleotide specificity of the enzyme and binds the substrate succinate, while the binding sites for coenzyme A and phosphate are found in the alpha subunit. This chain is Succinate--CoA ligase [ADP-forming] subunit beta, found in Mycobacterium ulcerans (strain Agy99).